Reading from the N-terminus, the 122-residue chain is Large ribosomal subunit protein uL14 (122 aa).

It belongs to the universal ribosomal protein uL14 family. In terms of assembly, part of the 50S ribosomal subunit. Forms a cluster with proteins L3 and L19. In the 70S ribosome, L14 and L19 interact and together make contacts with the 16S rRNA in bridges B5 and B8.

Binds to 23S rRNA. Forms part of two intersubunit bridges in the 70S ribosome. This Desulforamulus reducens (strain ATCC BAA-1160 / DSM 100696 / MI-1) (Desulfotomaculum reducens) protein is Large ribosomal subunit protein uL14.